Consider the following 408-residue polypeptide: Histidine--tRNA ligase (408 aa).

The protein belongs to the class-II aminoacyl-tRNA synthetase family. In terms of assembly, homodimer.

It is found in the cytoplasm. It carries out the reaction tRNA(His) + L-histidine + ATP = L-histidyl-tRNA(His) + AMP + diphosphate + H(+). The protein is Histidine--tRNA ligase of Campylobacter concisus (strain 13826).